A 96-amino-acid polypeptide reads, in one-letter code: Co-chaperonin GroES (96 aa).

The protein belongs to the GroES chaperonin family. As to quaternary structure, heptamer of 7 subunits arranged in a ring. Interacts with the chaperonin GroEL.

It localises to the cytoplasm. Together with the chaperonin GroEL, plays an essential role in assisting protein folding. The GroEL-GroES system forms a nano-cage that allows encapsulation of the non-native substrate proteins and provides a physical environment optimized to promote and accelerate protein folding. GroES binds to the apical surface of the GroEL ring, thereby capping the opening of the GroEL channel. This is Co-chaperonin GroES from Shewanella denitrificans (strain OS217 / ATCC BAA-1090 / DSM 15013).